A 281-amino-acid chain; its full sequence is MRSLVGLVAVIVTATFYLYSLSVFLPPGPQLHKQSHEGETTDAKDGDEPSEMETASSRLKFPSDLDELKEMAELLQFYKTEHTGYVLLLFCSAYLYKQAFAIPGSSFLNILAGALFGTWFGLLLTCVLTTVGATLCFLLSQAFGKHHIVKLFPDKVAMLQKKVEENRSSLFFFLLFLRFFPMSPNWFLNMTSPILNIPVTLFFMAVFIGLMPYNFICVQTGSMLSQISSLDDLFSWSVVLKLLLTACVALLPGALIRKYSTRHLHLDGLETNGLSQNKKNR.

The signal sequence occupies residues 1-22; sequence MRSLVGLVAVIVTATFYLYSLS. The disordered stretch occupies residues 32–56; it reads HKQSHEGETTDAKDGDEPSEMETAS. Over residues 34-47 the composition is skewed to basic and acidic residues; it reads QSHEGETTDAKDGD. 5 consecutive transmembrane segments (helical) span residues 84 to 104, 107 to 127, 170 to 190, 197 to 217, and 236 to 256; these read GYVL…AIPG, FLNI…LTCV, LFFF…FLNM, IPVT…NFIC, and WSVV…GALI.

Belongs to the TMEM41 family.

The protein resides in the membrane. This chain is Transmembrane protein 41A-A (tmem41aa), found in Danio rerio (Zebrafish).